A 278-amino-acid polypeptide reads, in one-letter code: HTH-type transcriptional activator RhaS (278 aa).

One can recognise an HTH araC/xylS-type domain in the interval 174-272 (NLLLAWLEDH…NWSPRDIRQG (99 aa)). 2 DNA-binding regions (H-T-H motif) span residues 191 to 212 (DAVA…KQQT) and 239 to 262 (VTDI…RREF).

In terms of assembly, binds DNA as a dimer.

Its subcellular location is the cytoplasm. Its function is as follows. Activates expression of the rhaBAD and rhaT operons. This Escherichia coli O6:H1 (strain CFT073 / ATCC 700928 / UPEC) protein is HTH-type transcriptional activator RhaS.